Consider the following 261-residue polypeptide: 5'-nucleotidase SurE (261 aa).

Positions 8, 9, 39, and 91 each coordinate a divalent metal cation.

It belongs to the SurE nucleotidase family. A divalent metal cation is required as a cofactor.

The protein localises to the cytoplasm. It catalyses the reaction a ribonucleoside 5'-phosphate + H2O = a ribonucleoside + phosphate. In terms of biological role, nucleotidase that shows phosphatase activity on nucleoside 5'-monophosphates. This chain is 5'-nucleotidase SurE, found in Polaromonas sp. (strain JS666 / ATCC BAA-500).